The following is a 253-amino-acid chain: Large ribosomal subunit protein uL10m (253 aa).

A mitochondrion-targeting transit peptide spans 1-24 (MANLMQRSLPLTTTRTPVLQFLRF).

This sequence belongs to the universal ribosomal protein uL10 family. Component of the mitochondrial ribosome large subunit (39S) which comprises a 16S rRNA and about 50 distinct proteins.

It localises to the mitochondrion. In Drosophila pseudoobscura pseudoobscura (Fruit fly), this protein is Large ribosomal subunit protein uL10m (mRpL10).